The chain runs to 513 residues: Protein disulfide-isomerase 2 (513 aa).

A signal peptide spans 1–20 (MNKFLALLFVLALFANIAFS). Thioredoxin domains follow at residues 21–147 (CEGH…EELK) and 355–486 (DVIG…DNAA). Residues Cys-70, Cys-73, Cys-406, and Cys-409 each act as nucleophile in the active site. 2 disulfide bridges follow: Cys-70-Cys-73 and Cys-406-Cys-409. Positions 491 to 513 (LPSSQTDDNVESKKDSSAKHDEL) are disordered. Basic and acidic residues predominate over residues 500–513 (VESKKDSSAKHDEL). Positions 510–513 (HDEL) match the Prevents secretion from ER motif.

It belongs to the protein disulfide isomerase family.

It localises to the endoplasmic reticulum lumen. It catalyses the reaction Catalyzes the rearrangement of -S-S- bonds in proteins.. Functionally, participates in the folding of proteins containing disulfide bonds, may be involved in glycosylation, prolyl hydroxylation and triglyceride transfer. This chain is Protein disulfide-isomerase 2 (pdi2), found in Dictyostelium discoideum (Social amoeba).